We begin with the raw amino-acid sequence, 99 residues long: DNA-directed RNA polymerase subunit omega (99 aa).

Positions 55–99 are disordered; that stretch reads EAGTVISDPNPEEKRERLRIEREERKRQREQEQKELENRLRDEKN. Positions 65–99 are enriched in basic and acidic residues; that stretch reads PEEKRERLRIEREERKRQREQEQKELENRLRDEKN.

Belongs to the RNA polymerase subunit omega family. The RNAP catalytic core consists of 2 alpha, 1 beta, 1 beta' and 1 omega subunit. When a sigma factor is associated with the core the holoenzyme is formed, which can initiate transcription.

The catalysed reaction is RNA(n) + a ribonucleoside 5'-triphosphate = RNA(n+1) + diphosphate. Functionally, promotes RNA polymerase assembly. Latches the N- and C-terminal regions of the beta' subunit thereby facilitating its interaction with the beta and alpha subunits. This is DNA-directed RNA polymerase subunit omega from Enterococcus faecalis (strain ATCC 700802 / V583).